We begin with the raw amino-acid sequence, 342 residues long: Platelet-activating factor receptor (342 aa).

At 1-16 the chain is on the extracellular side; sequence MEPNNSFRVDSEFRYT. Asparagine 4 carries an N-linked (GlcNAc...) asparagine glycan. The chain crosses the membrane as a helical span at residues 17–38; the sequence is LFPIFYSIVFVLGVIANSYVLW. Residues 39–54 are Cytoplasmic-facing; that stretch reads VFARLYPSKKFNEIKI. A helical transmembrane segment spans residues 55 to 74; the sequence is FMVNLTMADLLFLVTLPLWI. Over 75–91 the chain is Extracellular; sequence VYYYNQGDWILPKFLCN. Residues cysteine 90 and cysteine 173 are joined by a disulfide bond. A helical transmembrane segment spans residues 92-113; the sequence is LAGCFFFINTYCSVAFLAVITY. Over 114-133 the chain is Cytoplasmic; the sequence is NRFQAVTRPIKTAQATTRKR. The chain crosses the membrane as a helical span at residues 134-155; it reads GILLSLIIWVSIVGAASYFFVL. The Extracellular portion of the chain corresponds to 156–184; sequence DSTNREPNKTGSANITRCFEHYEKGSIPV. Asparagine 163 and asparagine 169 each carry an N-linked (GlcNAc...) asparagine glycan. Residues 185–205 traverse the membrane as a helical segment; the sequence is LTIHIFLVFSFFLVFLIILFC. Residues 206-233 are Cytoplasmic-facing; the sequence is NLVIIRTLLTQQVQIQRNAEVKRRALWM. Residues 234-254 form a helical membrane-spanning segment; it reads VCTVLAVFIICFVPHHLVQLP. The Extracellular portion of the chain corresponds to 255-276; that stretch reads WTLAELGFQDTDFHQAINDAHQ. Residues 277-296 form a helical membrane-spanning segment; that stretch reads VTLCLLSTNCVLDPIIYCFL. Residues 297-342 lie on the Cytoplasmic side of the membrane; the sequence is TKKFRKHLTEKLYSMRESRKCSRATSETGTEVVMQLKDVPVKSLKY.

This sequence belongs to the G-protein coupled receptor 1 family. In terms of assembly, interacts with ARRB1. Found in oviductal epithelial and stroma cells. Levels in the oviduct are raised at days 2-4 of both pregnancy and of the estrus cycle. In the endometrium, localization is predominantly to the apical borders of glandular and luminal epithelial cells. Expressed at lower levels in endometrial stromal cells. Levels in the endometrium are increased at day 20 of pregnancy (at protein level).

The protein localises to the cell membrane. In terms of biological role, receptor for platelet activating factor, a chemotactic phospholipid mediator that possesses potent inflammatory, smooth-muscle contractile and hypotensive activity. Seems to mediate its action via a G protein that activates a phosphatidylinositol-calcium second messenger system. May be involved in the morphological and physical modifications of the oviduct and uterus during the estrus cycle and early pregnancy. The protein is Platelet-activating factor receptor of Bos taurus (Bovine).